Reading from the N-terminus, the 170-residue chain is Lipoprotein signal peptidase (170 aa).

The next 4 membrane-spanning stretches (helical) occupy residues 11–31 (LSWL…KFYF), 41–61 (IVVI…AAFS), 69–89 (WQRW…VVWL), and 95–115 (NETW…GNLY). Catalysis depends on residues Asp125 and Asp144. A helical membrane pass occupies residues 136–156 (YFPAFNFADSAITVGAVMLAL).

It belongs to the peptidase A8 family.

It is found in the cell inner membrane. The enzyme catalyses Release of signal peptides from bacterial membrane prolipoproteins. Hydrolyzes -Xaa-Yaa-Zaa-|-(S,diacylglyceryl)Cys-, in which Xaa is hydrophobic (preferably Leu), and Yaa (Ala or Ser) and Zaa (Gly or Ala) have small, neutral side chains.. The protein operates within protein modification; lipoprotein biosynthesis (signal peptide cleavage). Functionally, this protein specifically catalyzes the removal of signal peptides from prolipoproteins. The chain is Lipoprotein signal peptidase from Pseudomonas fluorescens (strain Pf0-1).